Reading from the N-terminus, the 449-residue chain is Nucleoprotein (449 aa).

A disordered region spans residues 1–55 (MSFTPGKQSSSRASSGNRSGNGILKWADQSDQSRNVQTRGRRVQSKQTATSQQPS). The span at 9–22 (SSSRASSGNRSGNG) shows a compositional bias: low complexity. Polar residues-rich tracts occupy residues 29-38 (QSDQSRNVQT) and 45-55 (SKQTATSQQPS). The interval 52–194 (QQPSGGTVVP…GYYIEGSGRS (143 aa)) is RNA-binding. The CoV N NTD domain maps to 61–190 (PYYSWFSGIT…VLPQGYYIEG (130 aa)). Positions 106, 122, and 164 each coordinate RNA. Disordered stretches follow at residues 158 to 231 (PADI…VTPD), 266 to 297 (ILNK…NFGG), and 387 to 449 (MMNI…TSEI). Position 167 is a phosphoserine; by host (Ser-167). Position 174 is a phosphothreonine; by host (Thr-174). Ser-191 carries the phosphoserine; by host modification. Composition is skewed to polar residues over residues 194 to 204 (SAPNSRSTSRA) and 212 to 227 (GSRS…STPG). Residues 259 to 384 (AKEVRQKILN…QNLNAYQHQE (126 aa)) enclose the CoV N CTD domain. Residues 266–276 (ILNKPRQKRSP) are compositionally biased toward basic residues. Positions 266-385 (ILNKPRQKRS…NLNAYQHQED (120 aa)) are dimerization. The residue at position 391 (Ser-391) is a Phosphoserine; by host. Polar residues predominate over residues 400–410 (QKNGQVENDNI). Positions 423 to 440 (KSRELTAEDISLLKKMDE) are enriched in basic and acidic residues. Ser-424 carries the phosphoserine; by host modification. Thr-428 carries the post-translational modification Phosphothreonine; by host.

It belongs to the betacoronavirus nucleocapsid protein family. Homooligomer. Both monomeric and oligomeric forms interact with RNA. Interacts with protein M. Interacts with NSP3; this interaction serves to tether the genome to the newly translated replicase-transcriptase complex at a very early stage of infection. Post-translationally, ADP-ribosylated. The ADP-ribosylation is retained in the virion during infection. In terms of processing, phosphorylated on serine and threonine residues.

The protein localises to the virion. Its subcellular location is the host endoplasmic reticulum-Golgi intermediate compartment. The protein resides in the host Golgi apparatus. Its function is as follows. Packages the positive strand viral genome RNA into a helical ribonucleocapsid (RNP) and plays a fundamental role during virion assembly through its interactions with the viral genome and membrane protein M. Plays an important role in enhancing the efficiency of subgenomic viral RNA transcription as well as viral replication. The polypeptide is Nucleoprotein (Sus scrofa (Pig)).